A 30-amino-acid polypeptide reads, in one-letter code: Snaclec carinactivase-1 regulatory subunit 14 kDa chain (30 aa).

The C-type lectin domain occupies 1–30 (DCLPDWFHYEGHCYRVFDEPKKWADAEKFC). Cysteine 2 and cysteine 13 form a disulfide bridge.

The protein belongs to the snaclec family. Heterodimer of a metalloproteinase subunit and a regulatory subunit comprising two polypeptides disulfide-linked (14 kDa and 17 kDa chains). In terms of tissue distribution, expressed by the venom gland.

It localises to the secreted. In terms of biological role, calcium-dependent prothrombin activator. This protein may activate prothrombin via recognition by the regulatory subunit of the calcium ion bound conformation of its gamma-carboxyglutamic acid (GLA) domain, and the subsequent conversion of prothrombin to active thrombin is catalyzed by the catalytic subunit. The protein is Snaclec carinactivase-1 regulatory subunit 14 kDa chain of Echis carinatus (Saw-scaled viper).